The primary structure comprises 393 residues: D-alanyl-D-alanine carboxypeptidase DacA (393 aa).

The signal sequence occupies residues 1-18 (MLKRTTKIAFLSSFVALS). The active-site Acyl-ester intermediate is S65. The active-site Proton acceptor is the K68. Residue S128 is part of the active site. K231 is a binding site for substrate.

This sequence belongs to the peptidase S11 family.

The protein resides in the cell inner membrane. The enzyme catalyses Preferential cleavage: (Ac)2-L-Lys-D-Ala-|-D-Ala. Also transpeptidation of peptidyl-alanyl moieties that are N-acyl substituents of D-alanine.. The protein operates within cell wall biogenesis; peptidoglycan biosynthesis. Removes C-terminal D-alanyl residues from sugar-peptide cell wall precursors. This Haemophilus influenzae (strain ATCC 51907 / DSM 11121 / KW20 / Rd) protein is D-alanyl-D-alanine carboxypeptidase DacA (dacA).